The following is a 587-amino-acid chain: Arginine--tRNA ligase (587 aa).

Residues 126–136 carry the 'HIGH' region motif; it reads ANPTGPLHVGH.

It belongs to the class-I aminoacyl-tRNA synthetase family. Monomer.

It localises to the cytoplasm. It carries out the reaction tRNA(Arg) + L-arginine + ATP = L-arginyl-tRNA(Arg) + AMP + diphosphate. The protein is Arginine--tRNA ligase of Aromatoleum aromaticum (strain DSM 19018 / LMG 30748 / EbN1) (Azoarcus sp. (strain EbN1)).